The primary structure comprises 719 residues: Homeobox protein SIX5 (719 aa).

2 stretches are compositionally biased toward low complexity: residues 1–22 (MATS…AAAT) and 31–65 (QLLQ…GPGS). 2 disordered regions span residues 1-73 (MATS…VTEV) and 241-287 (WFKN…VASM). The homeobox DNA-binding region spans 194–253 (GEETVYCFKERSRAALKACYRGNRYPTPDEKRRLATLTGLSLTQVSNWFKNRRQRDRTGT). A compositionally biased stretch (basic and acidic residues) spans 272–282 (ESSRSPEDLER).

Belongs to the SIX/Sine oculis homeobox family. Probably binds DNA dimer. Interacts with EYA3, and probably EYA1 and EYA2.

It is found in the nucleus. Its function is as follows. Transcription factor that is thought to be involved in regulation of organogenesis. May be involved in determination and maintenance of retina formation. Binds a 5'-GGTGTCAG-3' motif present in the ARE regulatory element of ATP1A1. Binds a 5'-TCA[AG][AG]TTNC-3' motif present in the MEF3 element in the myogenin promoter, and in the IGFBP5 promoter. Thought to be regulated by association with Dach and Eya proteins, and seems to be coactivated by EYA1, EYA2 and EYA3. The polypeptide is Homeobox protein SIX5 (Six5) (Mus musculus (Mouse)).